The sequence spans 1123 residues: MSSSRPSQSSTTSSRSKHSARIIAQTSIDAKLHADFEESGDSFDYSSSVRVTNVAEGEQRPKSDKVTTAYLHQIQKGKFIQPFGCLLALDEKTLKVIAFSENAPEMLTMVSHAVPSVGEHPVLGIGIDIRTIFTGPSGAALQKALGFGEVSLLNPVLVHCKNSGKPFYAIVHRVTGSLIIDFEPVKPYEVPMTAAGALQSYKLAAKAITRLQSLPSGSMERLCDTMVQEVFELTGYDRVMGYKFHDDDHGEVVSEITKPGLEPYLGLHYPATDIPQAARFLFMKNKVRMICDCRAKHVKVVQDEKLPFDLTLCGSTLRAPHYCHLQYMENMNSIASLVMAVVVNDGDEEGESSDSSQSQKRKRLWGLVVSHNTTPRFAPFPLRYACEFLAQVFAILVNKELELENQFLEKNILRTQTLLCDMLMRDAPLGIVSQSPNIMDLIKCDGAALLYKNKIHRLGMNPSDFQLHDIVSWLCEYHTDSTGLSTDSLYDAGFPGALALGDAVCGMAAVRISDKDWLFWYRSHTAAEVRWGGAKHEPGEKDDGRKMHPRSSFKGFLEVVKTRSIPWKDYEMDRIHSLQLILRNAFKDADAVNSNTISIHTKLNDLKIDGMQELEAVTAEMVRLIETASVPIFAVDVDGQVNGWNTKVAELTGLPVDEAIGKHLLTLVEDSSVDTVNKMLELALQGQEERNVEFEIKTHGPSRDSSPISLIVNACASKDVRDSVVGVCFIAQDITGQKSIMDKFTRIEGDYRAIIQNPHPLIPPIFGTDQFGWCSEWNSAMTMLTGWRRDDVMDKMLLGEVFGTQAACCRLKNQEAFVNFGVILNNAITGQESEKIPFGFFARYGKYVECLLCVSKRLDKEGAVTGLFCFLQLASHELQQALHVQRLSEQTALKRLKVLAYIRRQIRNPLSGIIFSRKMLEGTSLGEEQKNILHTSAQCQRQLDKILDDTDLDSIIEGYLDLEMLEFKLHEVLVASISQVMMKSNGKNIMISNDMVEDLLNETLYGDSPRLQQVLANFLLVSVNSTPSGGKLSISGKLTKDRIGESVQLALLEFRIRHTGGGVPEELLSQMFGSEADASEEGISLLVSRKLVKLMNGEVQYLREAGRSTFIISVELAVATKSS.

Positions 1-14 (MSSSRPSQSSTTSS) are enriched in low complexity. A disordered region spans residues 1–20 (MSSSRPSQSSTTSSRSKHSA). The GAF domain occupies 218–401 (SMERLCDTMV…VFAILVNKEL (184 aa)). C323 contributes to the phytochromobilin binding site. The PAS 1 domain maps to 617–687 (VTAEMVRLIE…KMLELALQGQ (71 aa)). Residues 690 to 746 (RNVEFEIKTHGPSRDSSPISLIVNACASKDVRDSVVGVCFIAQDITGQKSIMDKFTR) enclose the PAC domain. Residues 747-821 (IEGDYRAIIQ…KNQEAFVNFG (75 aa)) enclose the PAS 2 domain. The Histidine kinase domain occupies 901–1118 (YIRRQIRNPL…TFIISVELAV (218 aa)).

It belongs to the phytochrome family. Homodimer. Contains one covalently linked phytochromobilin chromophore.

Functionally, regulatory photoreceptor which exists in two forms that are reversibly interconvertible by light: the Pr form that absorbs maximally in the red region of the spectrum and the Pfr form that absorbs maximally in the far-red region. Photoconversion of Pr to Pfr induces an array of morphogenic responses, whereas reconversion of Pfr to Pr cancels the induction of those responses. Pfr controls the expression of a number of nuclear genes including those encoding the small subunit of ribulose-bisphosphate carboxylase, chlorophyll A/B binding protein, protochlorophyllide reductase, rRNA, etc. It also controls the expression of its own gene(s) in a negative feedback fashion. The chain is Phytochrome A (PHYA) from Solanum tuberosum (Potato).